We begin with the raw amino-acid sequence, 307 residues long: MELLFLGTGAGIPAKARNVTSVALKLLEERRSVWLFDCGEATQHQILHTTIKPRKIEKIFITHMHGDHVYGLPGLLGSRSFQGGEDELTVYGPKGIKAFIETSLAVTKTHLTYPLAIQEIEEGIVFEDDQFIVTAVSVIHGVEAFGYRVQEKDVPGSLKADVLKEMNIPPGPVYQKIKKGETVTLEDGRIINGNDFLEPPKKGRSVVFSGDTRVSDKLKELARDCDVLVHEATFAKEDRKLAYDYYHSTTEQAAVTAKEARAKQLILTHISARYQGDASLELQKEAVDVFPNSVAAYDFLEVNVPRG.

Zn(2+)-binding residues include H63, H65, D67, H68, H140, D211, and H269. D67 (proton acceptor) is an active-site residue.

Belongs to the RNase Z family. Homodimer. Zn(2+) is required as a cofactor.

It catalyses the reaction Endonucleolytic cleavage of RNA, removing extra 3' nucleotides from tRNA precursor, generating 3' termini of tRNAs. A 3'-hydroxy group is left at the tRNA terminus and a 5'-phosphoryl group is left at the trailer molecule.. In terms of biological role, zinc phosphodiesterase, which displays some tRNA 3'-processing endonuclease activity. Probably involved in tRNA maturation, by removing a 3'-trailer from precursor tRNA. This is Ribonuclease Z from Bacillus subtilis (strain 168).